Reading from the N-terminus, the 510-residue chain is Major facilitator superfamily domain-containing protein 4A (510 aa).

Transmembrane regions (helical) follow at residues 19–39, 53–73, 82–102, 107–127, 139–159, 218–238, 303–323, 345–365, 380–400, 401–421, 434–454, and 462–482; these read LTYW…GPTL, ISWV…LGGV, LWAL…IPFC, VLAS…TVAN, AFFL…SPLI, YAFW…LFLL, FFAI…MMGA, GYLP…SIPV, VGVV…IFLF, VGTA…LAYT, VLVT…GLIF, and FLVC…LLLF.

The protein belongs to the major facilitator superfamily.

The protein resides in the membrane. The protein is Major facilitator superfamily domain-containing protein 4A of Mus musculus (Mouse).